We begin with the raw amino-acid sequence, 337 residues long: Ketol-acid reductoisomerase (NADP(+)) (337 aa).

In terms of domain architecture, KARI N-terminal Rossmann spans Val3–Thr183. Residues Tyr26–Gln29, Ser52, Ser54, and Asp84–Gln87 each bind NADP(+). Residue His109 is part of the active site. Residue Gly135 coordinates NADP(+). A KARI C-terminal knotted domain is found at Thr184–Val329. Mg(2+) is bound by residues Asp192, Glu196, Glu228, and Glu232. Ser253 contacts substrate.

Belongs to the ketol-acid reductoisomerase family. Mg(2+) is required as a cofactor.

It catalyses the reaction (2R)-2,3-dihydroxy-3-methylbutanoate + NADP(+) = (2S)-2-acetolactate + NADPH + H(+). The catalysed reaction is (2R,3R)-2,3-dihydroxy-3-methylpentanoate + NADP(+) = (S)-2-ethyl-2-hydroxy-3-oxobutanoate + NADPH + H(+). The protein operates within amino-acid biosynthesis; L-isoleucine biosynthesis; L-isoleucine from 2-oxobutanoate: step 2/4. It functions in the pathway amino-acid biosynthesis; L-valine biosynthesis; L-valine from pyruvate: step 2/4. Involved in the biosynthesis of branched-chain amino acids (BCAA). Catalyzes an alkyl-migration followed by a ketol-acid reduction of (S)-2-acetolactate (S2AL) to yield (R)-2,3-dihydroxy-isovalerate. In the isomerase reaction, S2AL is rearranged via a Mg-dependent methyl migration to produce 3-hydroxy-3-methyl-2-ketobutyrate (HMKB). In the reductase reaction, this 2-ketoacid undergoes a metal-dependent reduction by NADPH to yield (R)-2,3-dihydroxy-isovalerate. This Nocardia farcinica (strain IFM 10152) protein is Ketol-acid reductoisomerase (NADP(+)).